The following is a 160-amino-acid chain: Transcription elongation factor GreA (160 aa).

Residues 4 to 70 are a coiled coil; the sequence is QKQYPMTQEG…IEQDIQRIEH (67 aa).

It belongs to the GreA/GreB family.

Necessary for efficient RNA polymerase transcription elongation past template-encoded arresting sites. The arresting sites in DNA have the property of trapping a certain fraction of elongating RNA polymerases that pass through, resulting in locked ternary complexes. Cleavage of the nascent transcript by cleavage factors such as GreA or GreB allows the resumption of elongation from the new 3'terminus. GreA releases sequences of 2 to 3 nucleotides. This chain is Transcription elongation factor GreA, found in Staphylococcus carnosus (strain TM300).